Consider the following 161-residue polypeptide: Lipoprotein signal peptidase (161 aa).

Helical transmembrane passes span 9-29, 64-84, and 96-113; these read WLWLSLVVITLDLFSKYLVVE, WQKYLFLTLAIIISFILANVL, and MAYALIIGGAIGNAIDRA. Residues Asp-120 and Asp-138 contribute to the active site. The helical transmembrane segment at 133–153 threads the bilayer; it reads VFNIADVAIVMGAGLLILETF.

This sequence belongs to the peptidase A8 family.

It is found in the cell inner membrane. It catalyses the reaction Release of signal peptides from bacterial membrane prolipoproteins. Hydrolyzes -Xaa-Yaa-Zaa-|-(S,diacylglyceryl)Cys-, in which Xaa is hydrophobic (preferably Leu), and Yaa (Ala or Ser) and Zaa (Gly or Ala) have small, neutral side chains.. It functions in the pathway protein modification; lipoprotein biosynthesis (signal peptide cleavage). This protein specifically catalyzes the removal of signal peptides from prolipoproteins. This Haemophilus ducreyi (strain 35000HP / ATCC 700724) protein is Lipoprotein signal peptidase.